The following is a 133-amino-acid chain: Small ribosomal subunit protein uS8 (133 aa).

The protein belongs to the universal ribosomal protein uS8 family. As to quaternary structure, part of the 30S ribosomal subunit. Contacts proteins S5 and S12.

Its function is as follows. One of the primary rRNA binding proteins, it binds directly to 16S rRNA central domain where it helps coordinate assembly of the platform of the 30S subunit. This is Small ribosomal subunit protein uS8 from Amoebophilus asiaticus (strain 5a2).